The chain runs to 3210 residues: PF 1022-synthetase (3210 aa).

Residues 68–454 (VDDRRHAIGH…VKELDVVTAE (387 aa)) form a condensation 1 region. Residues 483–876 (AGDPNKAAVF…GRKDSQVKIR (394 aa)) form an adenylation 1 region. One can recognise a Carrier 1 domain in the interval 1010–1086 (APATGIEVKL…GLVDVIGRDP (77 aa)). At Ser-1047 the chain carries O-(pantetheine 4'-phosphoryl)serine. The condensation 2 stretch occupies residues 1104-1534 (SFAQGRLWFL…RTPIAVLPLT (431 aa)). The tract at residues 1563–2023 (FRKQVAAHPH…GRMDQQVKIR (461 aa)) is adenylation 2. The S-adenosyl-L-methionine-dependent N-methyltransferase stretch occupies residues 2081–2236 (EGWKDFFESN…YLLEVVESLV (156 aa)). Carrier domains are found at residues 2570-2644 (DPFV…RQGL) and 2668-2742 (TPSD…RLTQ). Ser-2604 and Ser-2702 each carry O-(pantetheine 4'-phosphoryl)serine. The segment at 2788 to 3203 (LDVYPATQMQ…KRMLEELCGN (416 aa)) is condensation 3. A disordered region spans residues 2976 to 3002 (VIKGNNNTTPPPPPQQQSTPSGAHHAS).

This sequence belongs to the NRP synthetase family. The cofactor is pantetheine 4'-phosphate.

It catalyses the reaction 2 (R)-3-phenyllactate + 2 (R)-lactate + 4 L-leucine + 4 S-adenosyl-L-methionine + 8 ATP = PF1022A + 8 AMP + 4 S-adenosyl-L-homocysteine + 8 diphosphate + 8 H(+). The catalysed reaction is 4 (R)-3-phenyllactate + 4 L-leucine + 4 S-adenosyl-L-methionine + 8 ATP = PF1022B + 8 AMP + 4 S-adenosyl-L-homocysteine + 8 diphosphate + 8 H(+). The enzyme catalyses 3 (R)-3-phenyllactate + (R)-lactate + 4 L-leucine + 4 S-adenosyl-L-methionine + 8 ATP = PF1022C + 8 AMP + 4 S-adenosyl-L-homocysteine + 8 diphosphate + 8 H(+). It carries out the reaction (R)-3-phenyllactate + 3 (R)-lactate + 4 L-leucine + 4 S-adenosyl-L-methionine + 8 ATP = PF1022D + 8 AMP + 4 S-adenosyl-L-homocysteine + 8 diphosphate + 8 H(+). It catalyses the reaction 4 (R)-lactate + 4 L-leucine + 4 S-adenosyl-L-methionine + 8 ATP = PF1022F + 8 AMP + 4 S-adenosyl-L-homocysteine + 8 diphosphate + 8 H(+). Its function is as follows. Nonribosomal peptide synthetase that synthesizes cyclooctadepsipeptides (CODPs) PF 1022 that show powerful broad-spectrum anthelmintic activity with low toxicity in animals. Couples 4 N-methyl-L-leucines and a varying content of alpha-D-hydroxy acids (D-lactates or D-phenyllactates) in an alternative fashion. The enzyme is capable of synthesizing all known natural cyclooctadepsipeptides of the PF1022 type differing in the content of D-lactate and D-phenyllactate, using from 4 D-lactates (PF 1022F) to 4 D-phenyllactates (PF 1022B), respectively. The formation of different PF-related compounds is mainly controlled by the molar ratio of the hydroxy acids. N-methylation of the substrate L-leucine takes place after covalent binding prior to peptide bond formation. The polypeptide is PF 1022-synthetase (Rosellinia sp. (Mycelia sterilia)).